Here is a 525-residue protein sequence, read N- to C-terminus: Putative ribose/galactose/methyl galactoside import ATP-binding protein (525 aa).

The interval 1 to 20 (MSGSATASPPAKPDLPSSDG) is disordered. ABC transporter domains lie at 33–269 (LEIS…VGRE) and 279–523 (KPAG…SGHR). 65 to 72 (GENGAGKS) lines the ATP pocket.

Belongs to the ABC transporter superfamily. Carbohydrate importer 2 (CUT2) (TC 3.A.1.2) family.

It is found in the cell inner membrane. It catalyses the reaction D-ribose(out) + ATP + H2O = D-ribose(in) + ADP + phosphate + H(+). It carries out the reaction D-galactose(out) + ATP + H2O = D-galactose(in) + ADP + phosphate + H(+). Functionally, part of an ABC transporter complex involved in carbohydrate import. Could be involved in ribose, galactose and/or methyl galactoside import. Responsible for energy coupling to the transport system. In Pseudomonas syringae pv. tomato (strain ATCC BAA-871 / DC3000), this protein is Putative ribose/galactose/methyl galactoside import ATP-binding protein.